Consider the following 339-residue polypeptide: Uroporphyrinogen decarboxylase (339 aa).

Substrate is bound by residues 21–25 (RQAGR), Asp-71, Tyr-147, Ser-202, and His-315.

The protein belongs to the uroporphyrinogen decarboxylase family. In terms of assembly, homodimer.

The protein localises to the cytoplasm. It catalyses the reaction uroporphyrinogen III + 4 H(+) = coproporphyrinogen III + 4 CO2. It functions in the pathway porphyrin-containing compound metabolism; protoporphyrin-IX biosynthesis; coproporphyrinogen-III from 5-aminolevulinate: step 4/4. Its function is as follows. Catalyzes the decarboxylation of four acetate groups of uroporphyrinogen-III to yield coproporphyrinogen-III. The sequence is that of Uroporphyrinogen decarboxylase from Helicobacter pylori (strain Shi470).